We begin with the raw amino-acid sequence, 673 residues long: DNA ligase (673 aa).

34-38 (DAAFD) is a binding site for NAD(+). The tract at residues 54–73 (LRRPDSPTQRVGGATAPDFA) is disordered. Residues 83–84 (SL) and E114 contribute to the NAD(+) site. The active-site N6-AMP-lysine intermediate is the K116. Residues R137, E176, K292, and K316 each contribute to the NAD(+) site. Residues C410, C413, C428, and C433 each coordinate Zn(2+). The region spanning 594–673 (PAEGPLAGMT…DEFCERYLQG (80 aa)) is the BRCT domain.

The protein belongs to the NAD-dependent DNA ligase family. LigA subfamily. Mg(2+) serves as cofactor. It depends on Mn(2+) as a cofactor.

The enzyme catalyses NAD(+) + (deoxyribonucleotide)n-3'-hydroxyl + 5'-phospho-(deoxyribonucleotide)m = (deoxyribonucleotide)n+m + AMP + beta-nicotinamide D-nucleotide.. DNA ligase that catalyzes the formation of phosphodiester linkages between 5'-phosphoryl and 3'-hydroxyl groups in double-stranded DNA using NAD as a coenzyme and as the energy source for the reaction. It is essential for DNA replication and repair of damaged DNA. This Symbiobacterium thermophilum (strain DSM 24528 / JCM 14929 / IAM 14863 / T) protein is DNA ligase.